The sequence spans 266 residues: NADP-dependent mannitol dehydrogenase (266 aa).

Residues S53, N107, and K140 each coordinate NADP(+). S159 (proton donor) is an active-site residue. Y174, K178, I206, and T208 together coordinate NADP(+). Y174 acts as the Proton acceptor in catalysis. Residue K178 is the Lowers pKa of active site Tyr of the active site.

This sequence belongs to the short-chain dehydrogenases/reductases (SDR) family. As to quaternary structure, homotetramer.

It carries out the reaction D-mannitol + NADP(+) = D-fructose + NADPH + H(+). D-mannitol 2-dehydrogenase which is not necessary for D-mannitol catabolism. D-mannitol metabolism occurs via at least two different routes involving mannitol dehydrogenase (MDH) or mannitol 1-phosphate dehydrogenase, and the exact physiological role of mannitol dehydrogenases remains unclear. The polypeptide is NADP-dependent mannitol dehydrogenase (Hypocrea jecorina (strain ATCC 56765 / BCRC 32924 / NRRL 11460 / Rut C-30) (Trichoderma reesei)).